Consider the following 298-residue polypeptide: Glycine--tRNA ligase alpha subunit (298 aa).

It belongs to the class-II aminoacyl-tRNA synthetase family. In terms of assembly, tetramer of two alpha and two beta subunits.

The protein localises to the cytoplasm. The catalysed reaction is tRNA(Gly) + glycine + ATP = glycyl-tRNA(Gly) + AMP + diphosphate. The sequence is that of Glycine--tRNA ligase alpha subunit from Lacticaseibacillus paracasei (strain ATCC 334 / BCRC 17002 / CCUG 31169 / CIP 107868 / KCTC 3260 / NRRL B-441) (Lactobacillus paracasei).